A 643-amino-acid chain; its full sequence is Macrolide export ATP-binding/permease protein MacB (643 aa).

The region spanning 4 to 242 (IEIKELNRYF…VNNQSKAKSR (239 aa)) is the ABC transporter domain. 40-47 (GQSGSGKS) contributes to the ATP binding site. The next 4 membrane-spanning stretches (helical) occupy residues 269 to 289 (LLTMLGIIIGITSVVSVVALG), 523 to 543 (IAFISLIVGGIGVMNIMLVSV), 572 to 592 (ILICMIGGISGIMLSLIIGGI), and 603 to 623 (VFSTFSIVAAVLCSTLIGVIF).

The protein belongs to the ABC transporter superfamily. Macrolide exporter (TC 3.A.1.122) family. In terms of assembly, homodimer. Part of the tripartite efflux system MacAB-TolC, which is composed of an inner membrane transporter, MacB, a periplasmic membrane fusion protein, MacA, and an outer membrane component, TolC. The complex forms a large protein conduit and can translocate molecules across both the inner and outer membranes. Interacts with MacA.

It is found in the cell inner membrane. Its function is as follows. Part of the tripartite efflux system MacAB-TolC. MacB is a non-canonical ABC transporter that contains transmembrane domains (TMD), which form a pore in the inner membrane, and an ATP-binding domain (NBD), which is responsible for energy generation. Confers resistance against macrolides. The chain is Macrolide export ATP-binding/permease protein MacB from Mannheimia succiniciproducens (strain KCTC 0769BP / MBEL55E).